A 184-amino-acid chain; its full sequence is Ribosome maturation factor RimM (184 aa).

One can recognise a PRC barrel domain in the interval 104–184; the sequence is SEDEFYWREL…RIEVDWDPGF (81 aa).

It belongs to the RimM family. In terms of assembly, binds ribosomal protein uS19.

The protein resides in the cytoplasm. Functionally, an accessory protein needed during the final step in the assembly of 30S ribosomal subunit, possibly for assembly of the head region. Essential for efficient processing of 16S rRNA. May be needed both before and after RbfA during the maturation of 16S rRNA. It has affinity for free ribosomal 30S subunits but not for 70S ribosomes. This is Ribosome maturation factor RimM from Vibrio atlanticus (strain LGP32) (Vibrio splendidus (strain Mel32)).